A 324-amino-acid polypeptide reads, in one-letter code: Fibronectin type III domain-containing protein 8 (324 aa).

The region spanning 179–280 (PDTPFIFEHT…KPYKFATLAT (102 aa)) is the Fibronectin type-III domain.

This chain is Fibronectin type III domain-containing protein 8 (FNDC8), found in Macaca fascicularis (Crab-eating macaque).